A 339-amino-acid polypeptide reads, in one-letter code: N-acetyl-gamma-glutamyl-phosphate reductase (339 aa).

C145 is an active-site residue.

The protein belongs to the NAGSA dehydrogenase family. Type 1 subfamily.

The protein resides in the cytoplasm. It catalyses the reaction N-acetyl-L-glutamate 5-semialdehyde + phosphate + NADP(+) = N-acetyl-L-glutamyl 5-phosphate + NADPH + H(+). It participates in amino-acid biosynthesis; L-arginine biosynthesis; N(2)-acetyl-L-ornithine from L-glutamate: step 3/4. Catalyzes the NADPH-dependent reduction of N-acetyl-5-glutamyl phosphate to yield N-acetyl-L-glutamate 5-semialdehyde. The chain is N-acetyl-gamma-glutamyl-phosphate reductase from Kosmotoga olearia (strain ATCC BAA-1733 / DSM 21960 / TBF 19.5.1).